A 267-amino-acid polypeptide reads, in one-letter code: uncharacterized protein (267 aa).

A disordered region spans residues 58 to 90; sequence RHTDDKQEKNQNEGEDNQKGENKTTDQQDGPKK. Helical transmembrane passes span 101 to 121 and 226 to 246; these read IYVL…LSQM and GMTT…AWLG.

Its subcellular location is the membrane. This is an uncharacterized protein from Caenorhabditis elegans.